A 1060-amino-acid polypeptide reads, in one-letter code: Bumetanide-sensitive sodium-(potassium)-chloride cotransporter (1060 aa).

Residues 1–122 lie on the Cytoplasmic side of the membrane; sequence MNDENRFNVS…KSPTPAVGIK (122 aa). The next 2 helical transmembrane spans lie at 123 to 143 and 154 to 174; these read LGWI…VMLF and GIGL…ITTL. Residues 175–197 lie on the Cytoplasmic side of the membrane; the sequence is SMSAICTNGEVKGGGIYYIISRS. Helical transmembrane passes span 198–218 and 250–270; these read LGPE…AVAA and IVGT…MDWE. Residues 271 to 275 are Cytoplasmic-facing; sequence SKAQN. 2 consecutive transmembrane segments (helical) span residues 276–296 and 332–352; these read FLIA…IMGP and FFSV…GANI. Residues 353 to 367 lie on the Cytoplasmic side of the membrane; that stretch reads SGDLKDPASAIPKGT. A helical transmembrane segment spans residues 368–388; the sequence is LLALLISMVSYTLMVLFAGGG. N-linked (GlcNAc...) asparagine glycans are attached at residues asparagine 396, asparagine 404, and asparagine 419. The helical transmembrane segment at 432–452 threads the bilayer; that stretch reads VMQLMSAWGPFIYGGCWAATL. Over 453–497 the chain is Cytoplasmic; sequence STALTNLLSVPRLIQALGVDRIYPGLIFFSKPYGRHGEPYRGYVL. Transmembrane regions (helical) follow at residues 498–518 and 563–583; these read TFFV…APLI and CVAI…AIFF. The Cytoplasmic segment spans residues 584–642; sequence TLYLIVHYRRPDVNWGSSTQAQMYKTALSSAHALARTGEHVKNYWPQLLVLAGRPQARP. Residues 643-663 form a helical membrane-spanning segment; sequence ALVDLGNLISKAGSLMIVGDI. The N-linked (GlcNAc...) asparagine glycan is linked to asparagine 816. The helical transmembrane segment at 882 to 902 threads the bilayer; sequence TLDVWWLYDDGGLTILLPYII. Over 903 to 1060 the chain is Cytoplasmic; the sequence is SQRSAWANCK…NHTSVLTFYS (158 aa).

This sequence belongs to the SLC12A transporter family.

Its subcellular location is the membrane. Electrically silent transporter system. Mediates sodium and chloride reabsorption. Plays a vital role in the regulation of ionic balance and cell volume. The polypeptide is Bumetanide-sensitive sodium-(potassium)-chloride cotransporter (Manduca sexta (Tobacco hawkmoth)).